Here is a 254-residue protein sequence, read N- to C-terminus: 4-hydroxy-tetrahydrodipicolinate reductase (254 aa).

NAD(+)-binding positions include 8 to 13 (GCSGKM), aspartate 35, 86 to 88 (CST), and 110 to 113 (SANM). The active-site Proton donor/acceptor is histidine 143. Histidine 144 contributes to the (S)-2,3,4,5-tetrahydrodipicolinate binding site. Lysine 147 serves as the catalytic Proton donor. 153-154 (GT) contacts (S)-2,3,4,5-tetrahydrodipicolinate.

This sequence belongs to the DapB family.

It is found in the cytoplasm. It catalyses the reaction (S)-2,3,4,5-tetrahydrodipicolinate + NAD(+) + H2O = (2S,4S)-4-hydroxy-2,3,4,5-tetrahydrodipicolinate + NADH + H(+). It carries out the reaction (S)-2,3,4,5-tetrahydrodipicolinate + NADP(+) + H2O = (2S,4S)-4-hydroxy-2,3,4,5-tetrahydrodipicolinate + NADPH + H(+). It functions in the pathway amino-acid biosynthesis; L-lysine biosynthesis via DAP pathway; (S)-tetrahydrodipicolinate from L-aspartate: step 4/4. Catalyzes the conversion of 4-hydroxy-tetrahydrodipicolinate (HTPA) to tetrahydrodipicolinate. The sequence is that of 4-hydroxy-tetrahydrodipicolinate reductase from Clostridium perfringens (strain ATCC 13124 / DSM 756 / JCM 1290 / NCIMB 6125 / NCTC 8237 / Type A).